Consider the following 1949-residue polypeptide: Protein GREB1 (1949 aa).

3 disordered regions span residues 52-77 (EGGS…GPPN), 302-334 (ILSN…GGGN), and 1085-1210 (EALE…GQRS). The span at 59-68 (NEEEEEEGEG) shows a compositional bias: acidic residues. Composition is skewed to basic and acidic residues over residues 1085-1095 (EALESDAEKLS) and 1110-1126 (TSEK…RSHD). Residues 1127–1147 (SASSSLSSKASGSALGGESSA) are compositionally biased toward low complexity. Basic and acidic residues predominate over residues 1166–1178 (PAEEGRAPGEKQR). A helical membrane pass occupies residues 1868-1888 (DLLFSGLLLYLCDSFVGASFL).

This sequence belongs to the GREB1 family. In terms of tissue distribution, expressed in proliferating prostatic tissue and prostate cancer.

The protein resides in the membrane. Its function is as follows. May play a role in estrogen-stimulated cell proliferation. Acts as a regulator of hormone-dependent cancer growth in breast and prostate cancers. This Homo sapiens (Human) protein is Protein GREB1 (GREB1).